The chain runs to 209 residues: dITP/XTP pyrophosphatase (209 aa).

7–12 serves as a coordination point for substrate; that stretch reads SSHGYK. The active-site Proton acceptor is Asp-70. Mg(2+) is bound at residue Asp-70. Residues Ser-71, 154–157, Lys-177, and 182–183 each bind substrate; these read FGYD and HR.

Belongs to the HAM1 NTPase family. Homodimer. Requires Mg(2+) as cofactor.

The enzyme catalyses XTP + H2O = XMP + diphosphate + H(+). It catalyses the reaction dITP + H2O = dIMP + diphosphate + H(+). It carries out the reaction ITP + H2O = IMP + diphosphate + H(+). Functionally, pyrophosphatase that catalyzes the hydrolysis of nucleoside triphosphates to their monophosphate derivatives, with a high preference for the non-canonical purine nucleotides XTP (xanthosine triphosphate), dITP (deoxyinosine triphosphate) and ITP. Seems to function as a house-cleaning enzyme that removes non-canonical purine nucleotides from the nucleotide pool, thus preventing their incorporation into DNA/RNA and avoiding chromosomal lesions. The protein is dITP/XTP pyrophosphatase of Chlamydia trachomatis serovar L2 (strain ATCC VR-902B / DSM 19102 / 434/Bu).